The chain runs to 298 residues: uncharacterized protein (298 aa).

This is an uncharacterized protein from Orgyia pseudotsugata multicapsid polyhedrosis virus (OpMNPV).